A 446-amino-acid chain; its full sequence is Enolase (446 aa).

S42 contributes to the Mg(2+) binding site. Phosphoserine is present on S42. A Pentapeptide insert motif is present at residues 104–108; the sequence is EWGWS. The residue at position 133 (K133) is an N6-acetyllysine. Residue K138 forms a Glycyl lysine isopeptide (Lys-Gly) (interchain with G-Cter in ubiquitin) linkage. Residue Y139 is modified to Phosphotyrosine. Residues H166 and E175 each coordinate substrate. E218 acts as the Proton donor in catalysis. D253 provides a ligand contact to Mg(2+). The short motif at 277–282 is the DKSLVK motif element; the sequence is DKSLVK. E304 and D331 together coordinate Mg(2+). Substrate contacts are provided by E304 and D331. Position 339 is a phosphothreonine (T339). The active-site Proton acceptor is K356. An N6-acetyllysine modification is found at K375. Substrate is bound by residues 383–386 and K407; that span reads SHRS.

The protein belongs to the enolase family. As to quaternary structure, homodimer. Forms a complex at least composed of DegP, ENO and HSP70. Interacts with G-actin. Interacts (via the DKSLVK motif) with mammalian host PLG/plasminogen (present in the mosquito blood meal); the interaction occurs at the ookinete cell surface and is required for ookinete invasion of the mosquito midgut. Interacts with A.gambiae EBP; depending on the Plasmodium species, the interaction is either involved in ookinete invasion of the mosquito midgut (P.berghei) or is dispensable (P.falciparum). It depends on Mg(2+) as a cofactor.

The protein localises to the cytoplasm. Its subcellular location is the nucleus. It localises to the cytoskeleton. The protein resides in the cell surface. It is found in the cell membrane. The protein localises to the vacuole. The enzyme catalyses (2R)-2-phosphoglycerate = phosphoenolpyruvate + H2O. It participates in carbohydrate degradation; glycolysis; pyruvate from D-glyceraldehyde 3-phosphate: step 4/5. In terms of biological role, glycolytic enzyme that catalyzes the conversion of 2-phosphoglycerate to phosphoenolpyruvate. In addition to glycolysis, involved in various processes such as parasite development and invasion. Plays an essential role during ookinete invasion of the mosquito vector midgut by mediating the interaction of the ookinete with the midgut epithelium and, further, by binding to mammalian host plasminogen in the blood meal, whose conversion to active plasmin promotes the invasion process. The sequence is that of Enolase from Plasmodium falciparum (isolate FCR-3 / Gambia).